Consider the following 383-residue polypeptide: MSLKQHTQTIFRQQFDRESDITIKAPGRVNLIGEHTDYNDGFVLPCAINYETVISCGKRGDRQIRVIAADYENQQDIFSLDAPIVPHPEYRWADYVRGVVKHLQMRNADFGGADLVICGNVPQGAGLSSSASLEVAVGQALQSLYQLPLSGVELALNGQEAENQFVGCNCGIMDQLISALGKKDHALLIDCRTLETRAVPMPENMAVVIINSNIQRGLVDSEYNTRRQQCEAAARFFGVKALRDVEPSLFFSIQDELDPVVAKRARHVISENARTLAAADALAAGNLKLMGQLMQESHISMRDDFEITVPPIDRLVEIVKSVIGDQGGVRMTGGGFGGCIVALMPLELVEQVRTTVAQEYPAHSGGKKETFYVCQASQGAGLC.

Residue 34–37 (EHTD) participates in substrate binding. Position 124 to 130 (124 to 130 (GAGLSSS)) interacts with ATP. Mg(2+) is bound by residues serine 130 and glutamate 162. The Proton acceptor role is filled by aspartate 174. Tyrosine 223 contributes to the substrate binding site.

This sequence belongs to the GHMP kinase family. GalK subfamily.

The protein localises to the cytoplasm. The catalysed reaction is alpha-D-galactose + ATP = alpha-D-galactose 1-phosphate + ADP + H(+). It functions in the pathway carbohydrate metabolism; galactose metabolism. In terms of biological role, catalyzes the transfer of the gamma-phosphate of ATP to D-galactose to form alpha-D-galactose-1-phosphate (Gal-1-P). This chain is Galactokinase, found in Yersinia pseudotuberculosis serotype IB (strain PB1/+).